A 234-amino-acid chain; its full sequence is DNA repair protein RecO (234 aa).

The protein belongs to the RecO family.

In terms of biological role, involved in DNA repair and RecF pathway recombination. The chain is DNA repair protein RecO from Hamiltonella defensa subsp. Acyrthosiphon pisum (strain 5AT).